A 103-amino-acid chain; its full sequence is Cytotoxin-like protein TA-BMBGT3 (103 aa).

The signal sequence occupies residues 1-21 (MKTLLLTLVVVTIICLDLGYT). Intrachain disulfides connect cysteine 24–cysteine 45, cysteine 27–cysteine 37, cysteine 38–cysteine 72, cysteine 76–cysteine 90, and cysteine 91–cysteine 96.

This sequence belongs to the three-finger toxin family. Ancestral subfamily. Orphan group XVII sub-subfamily. In terms of tissue distribution, expressed by the venom gland.

Its subcellular location is the secreted. The chain is Cytotoxin-like protein TA-BMBGT3 from Bungarus multicinctus (Many-banded krait).